Reading from the N-terminus, the 873-residue chain is Coatomer subunit gamma-2 (873 aa).

Residues 1–11 (MIKKFDKKDEE) are compositionally biased toward basic and acidic residues. A disordered region spans residues 1 to 21 (MIKKFDKKDEESGSGSNPFQN). HEAT repeat units follow at residues 64 to 101 (TEAT…ISED), 283 to 320 (RELA…KHPS), 321 to 355 (AVTA…GSES), 356 to 392 (SVDR…KYPR), 394 to 430 (HSAM…ENPE), and 467 to 504 (PQPS…QNDD).

It belongs to the COPG family. In terms of assembly, oligomeric complex.

It localises to the cytoplasm. The protein resides in the golgi apparatus membrane. The protein localises to the cytoplasmic vesicle. It is found in the COPI-coated vesicle membrane. Its function is as follows. The coatomer is a cytosolic protein complex that binds to dilysine motifs and reversibly associates with Golgi non-clathrin-coated vesicles, which further mediate biosynthetic protein transport from the ER, via the Golgi up to the trans Golgi network. Coatomer complex is required for budding from Golgi membranes, and is essential for the retrograde Golgi-to-ER transport of dilysine-tagged proteins. The protein is Coatomer subunit gamma-2 (copg2) of Takifugu rubripes (Japanese pufferfish).